Reading from the N-terminus, the 123-residue chain is CD59 glycoprotein (123 aa).

Positions 1-25 (MGSKGGFILLWLLSILAVLCHLGHS) are cleaved as a signal peptide. The UPAR/Ly6 domain occupies 26–103 (LQCYNCINPA…LCNKSDATIS (78 aa)). Intrachain disulfides connect Cys28–Cys51, Cys31–Cys38, Cys44–Cys65, Cys71–Cys89, and Cys90–Cys95. The N-linked (GlcNAc...) asparagine glycan is linked to Asn43. Ser98 is lipidated: GPI-anchor amidated serine. Residues 99–123 (DATISSGKTALLVILLLVATWHFCL) constitute a propeptide, removed in mature form.

As to quaternary structure, interacts with T-cell surface antigen CD2. In terms of processing, N- and O-glycosylated. As to expression, expressed in all tissues tested (lung, testis liver, kidney, spleen, heart and skeletal muscle). Highest levels in lung and spleen, lowest levels in liver and skeletal muscle.

Its subcellular location is the cell membrane. It localises to the secreted. Functionally, potent inhibitor of the complement membrane attack complex (MAC) action, which protects self-cells from damage during complement activation. Acts by binding to the beta-haipins of C8 (C8A and C8B) components of the assembling MAC, forming an intermolecular beta-sheet that prevents incorporation of the multiple copies of C9 required for complete formation of the osmolytic pore. The polypeptide is CD59 glycoprotein (Sus scrofa (Pig)).